Reading from the N-terminus, the 783-residue chain is Cyclin-dependent kinase 11A (783 aa).

Positions 18-58 (QEKKRRKEQEEKAEIKRLKNSDDRDSKRDSLEEGELRDHCM) are enriched in basic and acidic residues. Positions 18–396 (QEKKRRKEQE…SALTEGDYVP (379 aa)) are disordered. 2 positions are modified to phosphoserine: Ser-47 and Ser-72. A compositionally biased stretch (basic residues) spans 95 to 125 (EKVHHRKDEKRKEKWKHARVKEREHERRKRH). Basic and acidic residues-rich tracts occupy residues 126–215 (REEQ…DKVK), 226–241 (PPRE…KPGE), and 252–264 (QLKE…RDLL). Ser-271 carries the phosphoserine modification. The segment covering 279-290 (SAESSSAESGSG) has biased composition (low complexity). Composition is skewed to acidic residues over residues 291 to 352 (SEEE…EERE) and 371 to 380 (ESEEAEEEVG). A Protein kinase domain is found at 427–647 (QCLNRIEEGT…VFKELGTPSE (221 aa)). Residues 432–440 (IEEGTYGVV) and Lys-455 each bind ATP. At Ser-470 the chain carries Phosphoserine; by CDK7. Position 476 is a phosphothreonine; by CDK7 (Thr-476). Asp-550 functions as the Proton acceptor in the catalytic mechanism. Ser-577 is subject to Phosphoserine. At Tyr-582 the chain carries Phosphotyrosine. A phosphothreonine mark is found at Thr-583 and Thr-739. A disordered region spans residues 721 to 783 (SMFPTWPAKS…AAGPGFSLKF (63 aa)). Phosphoserine is present on Ser-740.

The protein belongs to the protein kinase superfamily. CMGC Ser/Thr protein kinase family. CDC2/CDKX subfamily. In terms of assembly, the cleaved p110 isoform, p110C, binds to the serine/threonine kinase PAK1. The p58 isoform but not the p110 isoform or p110C interacts with CCND3. The p110 isoforms are found in large molecular weight complexes containing CCNL1 and SFRS7. Mg(2+) serves as cofactor. In terms of processing, during apoptosis, induced by Fas or tumor necrosis factor, specific CKD11 p110 isoforms are cleaved by caspases to produce a protein (p110C) that contains the C-terminal kinase domain of the CDK11 proteins. Expressed ubiquitously. Some evidence of isoform-specific tissue distribution.

The protein resides in the cytoplasm. It is found in the nucleus. It carries out the reaction L-seryl-[protein] + ATP = O-phospho-L-seryl-[protein] + ADP + H(+). It catalyses the reaction L-threonyl-[protein] + ATP = O-phospho-L-threonyl-[protein] + ADP + H(+). Its activity is regulated as follows. Phosphorylation at Thr-436 or Tyr-437 inactivates the enzyme, while phosphorylation at Thr-583 activates it. Appears to play multiple roles in cell cycle progression, cytokinesis and apoptosis. The p110 isoforms have been suggested to be involved in pre-mRNA splicing, potentially by phosphorylating the splicing protein SFRS7. The p58 isoform may act as a negative regulator of normal cell cycle progression. This is Cyclin-dependent kinase 11A (CDK11A) from Homo sapiens (Human).